Here is a 370-residue protein sequence, read N- to C-terminus: Dual-specificity RNA methyltransferase RlmN (370 aa).

Catalysis depends on Glu-97, which acts as the Proton acceptor. A Radical SAM core domain is found at 103–340 (EKSRGTLCIS…CTVRRTRGDD (238 aa)). Cys-110 and Cys-345 are oxidised to a cystine. Residues Cys-117, Cys-121, and Cys-124 each contribute to the [4Fe-4S] cluster site. S-adenosyl-L-methionine contacts are provided by residues 170–171 (GE), Ser-202, 224–226 (SLH), and Asn-302. Residue Cys-345 is the S-methylcysteine intermediate of the active site.

This sequence belongs to the radical SAM superfamily. RlmN family. It depends on [4Fe-4S] cluster as a cofactor.

The protein localises to the cytoplasm. It carries out the reaction adenosine(2503) in 23S rRNA + 2 reduced [2Fe-2S]-[ferredoxin] + 2 S-adenosyl-L-methionine = 2-methyladenosine(2503) in 23S rRNA + 5'-deoxyadenosine + L-methionine + 2 oxidized [2Fe-2S]-[ferredoxin] + S-adenosyl-L-homocysteine. The catalysed reaction is adenosine(37) in tRNA + 2 reduced [2Fe-2S]-[ferredoxin] + 2 S-adenosyl-L-methionine = 2-methyladenosine(37) in tRNA + 5'-deoxyadenosine + L-methionine + 2 oxidized [2Fe-2S]-[ferredoxin] + S-adenosyl-L-homocysteine. Functionally, specifically methylates position 2 of adenine 2503 in 23S rRNA and position 2 of adenine 37 in tRNAs. m2A2503 modification seems to play a crucial role in the proofreading step occurring at the peptidyl transferase center and thus would serve to optimize ribosomal fidelity. In Hydrogenovibrio crunogenus (strain DSM 25203 / XCL-2) (Thiomicrospira crunogena), this protein is Dual-specificity RNA methyltransferase RlmN.